Consider the following 716-residue polypeptide: Fatty acid oxidation complex subunit alpha (716 aa).

Residues 1–189 (MIYQSPTIQV…KVGAVDAVVA (189 aa)) are enoyl-CoA hydratase/isomerase. Residue aspartate 296 coordinates substrate. Residues 311–716 (KEVNNAAVLG…AANNGSYYQA (406 aa)) are 3-hydroxyacyl-CoA dehydrogenase. NAD(+) contacts are provided by residues methionine 324, aspartate 343, 400–402 (VVE), lysine 407, and serine 429. The active-site For 3-hydroxyacyl-CoA dehydrogenase activity is the histidine 450. Asparagine 453 contributes to the NAD(+) binding site. Substrate is bound by residues asparagine 500 and tyrosine 660.

The protein in the N-terminal section; belongs to the enoyl-CoA hydratase/isomerase family. In the C-terminal section; belongs to the 3-hydroxyacyl-CoA dehydrogenase family. Heterotetramer of two alpha chains (FadB) and two beta chains (FadA).

It catalyses the reaction a (3S)-3-hydroxyacyl-CoA + NAD(+) = a 3-oxoacyl-CoA + NADH + H(+). The enzyme catalyses a (3S)-3-hydroxyacyl-CoA = a (2E)-enoyl-CoA + H2O. The catalysed reaction is a 4-saturated-(3S)-3-hydroxyacyl-CoA = a (3E)-enoyl-CoA + H2O. It carries out the reaction (3S)-3-hydroxybutanoyl-CoA = (3R)-3-hydroxybutanoyl-CoA. It catalyses the reaction a (3Z)-enoyl-CoA = a 4-saturated (2E)-enoyl-CoA. The enzyme catalyses a (3E)-enoyl-CoA = a 4-saturated (2E)-enoyl-CoA. It participates in lipid metabolism; fatty acid beta-oxidation. In terms of biological role, involved in the aerobic and anaerobic degradation of long-chain fatty acids via beta-oxidation cycle. Catalyzes the formation of 3-oxoacyl-CoA from enoyl-CoA via L-3-hydroxyacyl-CoA. It can also use D-3-hydroxyacyl-CoA and cis-3-enoyl-CoA as substrate. The chain is Fatty acid oxidation complex subunit alpha from Shewanella baltica (strain OS195).